The primary structure comprises 997 residues: Kinesin-like protein KIF19 (997 aa).

Positions 11–346 constitute a Kinesin motor domain; it reads QLTVALRIRP…LTYADRAKNI (336 aa). 104–111 is an ATP binding site; that stretch reads GPTGCGKT. Residues 360-437 are a coiled coil; that stretch reads HIAQYTSIIS…REQMDIRRQL (78 aa). The segment covering 468-491 has biased composition (basic and acidic residues); sequence RARKWRDEHRKETYGKDDSEKDSD. A disordered region spans residues 468–503; sequence RARKWRDEHRKETYGKDDSEKDSDTGDDQSDFIEPP. A coiled-coil region spans residues 508-577; that stretch reads ARETIQILEG…ELEIENTEMQ (70 aa). Disordered regions lie at residues 662-690, 792-811, and 848-890; these read NLTA…RNPI, GDRL…SMSE, and GGGS…SRSF. 2 stretches are compositionally biased toward basic and acidic residues: residues 792-802 and 869-880; these read GDRLQPMKERS and QKLEKREESLEV. Positions 861-889 form a coiled coil; the sequence is HRTQKKQAQKLEKREESLEVKRRKKRSRS.

This sequence belongs to the TRAFAC class myosin-kinesin ATPase superfamily. Kinesin family.

The protein localises to the cytoplasm. The protein resides in the cytoskeleton. It is found in the cell projection. Its subcellular location is the cilium. Its function is as follows. Plus end-directed microtubule-dependent motor protein that regulates the length of motile cilia by mediating depolymerization of microtubules at ciliary tips. This Xenopus laevis (African clawed frog) protein is Kinesin-like protein KIF19 (kif19).